A 136-amino-acid chain; its full sequence is Transcription antitermination protein NusB (136 aa).

Belongs to the NusB family.

In terms of biological role, involved in transcription antitermination. Required for transcription of ribosomal RNA (rRNA) genes. Binds specifically to the boxA antiterminator sequence of the ribosomal RNA (rrn) operons. The sequence is that of Transcription antitermination protein NusB from Paenarthrobacter aurescens (strain TC1).